Reading from the N-terminus, the 106-residue chain is Small ribosomal subunit protein uS10 (106 aa).

The protein belongs to the universal ribosomal protein uS10 family. Part of the 30S ribosomal subunit.

In terms of biological role, involved in the binding of tRNA to the ribosomes. This chain is Small ribosomal subunit protein uS10, found in Pyrobaculum aerophilum (strain ATCC 51768 / DSM 7523 / JCM 9630 / CIP 104966 / NBRC 100827 / IM2).